The following is a 497-amino-acid chain: Paired box protein Pax-2-A (497 aa).

Positions 16 to 142 (GHGGVNQLGG…SSINRIIRTK (127 aa)) form a DNA-binding region, paired. Residues 19–75 (GVNQLGGVFVNGRPLPDVVRQRIVELAHQGVRPCDISRQLRVSHGCVSKILGRYYET) form a PAI subdomain region. Positions 94–142 (KVVDKIAEYKRQNPTMFAWEIRDRLLAEGICDNDTVPSVSSINRIIRTK) are RED subdomain. Positions 143-224 (VQQPFHPTPD…GDSQSSVESL (82 aa)) are disordered. A compositionally biased stretch (low complexity) spans 166–178 (VPSTASPPVSSAS).

As to expression, expression becomes spatially localized at mid-gastrula stages and is confined to the nervous system (midbrain, hindbrain, spinal cord), sensory organs (optic vesicle and stalk, otic vesicle), visceral arches, developing excretory system (pronephros, pronephric duct, rectal diverticulum, proctodaeum) and thyroid gland. Splicing does not appear to be tissue-specific and tissues displayed the same spectrum of splice variants.

The protein localises to the nucleus. In terms of biological role, probable transcription factor. Involved in kidney development, acting synergistically with lhx1/lim-1 in pronephric morphogenesis during the tailbud stages. This chain is Paired box protein Pax-2-A (pax2-a), found in Xenopus laevis (African clawed frog).